The chain runs to 443 residues: Threonine/serine transporter TdcC (443 aa).

Transmembrane regions (helical) follow at residues 22–42, 44–64, 97–117, 140–160, 163–183, 207–227, 261–281, 311–331, 366–386, 389–409, and 423–443; these read TTWT…FFPI, AGFG…PIAF, GVVI…IYGV, FVAL…KDLM, VMSY…LSLI, ILIT…FSPI, MLMV…LSPA, FAIT…FKSF, ISMI…PNIL, IEAM…MYAI, and DNVF…YKLF.

This sequence belongs to the amino acid/polyamine transporter 2 family. SdaC/TdcC subfamily.

It localises to the cell inner membrane. The enzyme catalyses L-threonine(in) + H(+)(in) = L-threonine(out) + H(+)(out). It catalyses the reaction L-serine(in) + H(+)(in) = L-serine(out) + H(+)(out). Involved in the import of threonine and serine into the cell, with the concomitant import of a proton (symport system). The chain is Threonine/serine transporter TdcC from Shigella sonnei (strain Ss046).